Reading from the N-terminus, the 504-residue chain is Protein nucleotidyltransferase YdiU (504 aa).

The ATP site is built by glycine 99, glycine 101, arginine 102, lysine 122, aspartate 134, glycine 135, arginine 185, and arginine 192. The Proton acceptor role is filled by aspartate 261. Mg(2+) is bound by residues asparagine 262 and aspartate 271. An ATP-binding site is contributed by aspartate 271.

The protein belongs to the SELO family. Mg(2+) serves as cofactor. Requires Mn(2+) as cofactor.

It carries out the reaction L-seryl-[protein] + ATP = 3-O-(5'-adenylyl)-L-seryl-[protein] + diphosphate. It catalyses the reaction L-threonyl-[protein] + ATP = 3-O-(5'-adenylyl)-L-threonyl-[protein] + diphosphate. The enzyme catalyses L-tyrosyl-[protein] + ATP = O-(5'-adenylyl)-L-tyrosyl-[protein] + diphosphate. The catalysed reaction is L-histidyl-[protein] + UTP = N(tele)-(5'-uridylyl)-L-histidyl-[protein] + diphosphate. It carries out the reaction L-seryl-[protein] + UTP = O-(5'-uridylyl)-L-seryl-[protein] + diphosphate. It catalyses the reaction L-tyrosyl-[protein] + UTP = O-(5'-uridylyl)-L-tyrosyl-[protein] + diphosphate. Its function is as follows. Nucleotidyltransferase involved in the post-translational modification of proteins. It can catalyze the addition of adenosine monophosphate (AMP) or uridine monophosphate (UMP) to a protein, resulting in modifications known as AMPylation and UMPylation. This chain is Protein nucleotidyltransferase YdiU, found in Methylococcus capsulatus (strain ATCC 33009 / NCIMB 11132 / Bath).